A 304-amino-acid polypeptide reads, in one-letter code: Acetylglutamate kinase (304 aa).

Residues 77 to 78, Arg-99, and Asn-201 each bind substrate; that span reads GG.

This sequence belongs to the acetylglutamate kinase family. ArgB subfamily.

The protein localises to the cytoplasm. It catalyses the reaction N-acetyl-L-glutamate + ATP = N-acetyl-L-glutamyl 5-phosphate + ADP. Its pathway is amino-acid biosynthesis; L-arginine biosynthesis; N(2)-acetyl-L-ornithine from L-glutamate: step 2/4. Catalyzes the ATP-dependent phosphorylation of N-acetyl-L-glutamate. The chain is Acetylglutamate kinase from Methylibium petroleiphilum (strain ATCC BAA-1232 / LMG 22953 / PM1).